The following is a 23-amino-acid chain: Acidic phospholipase A2 Cvv-E6c (23 aa).

Ca(2+) is required as a cofactor. Contains 7 disulfide bonds. As to expression, expressed by the venom gland.

Its subcellular location is the secreted. It carries out the reaction a 1,2-diacyl-sn-glycero-3-phosphocholine + H2O = a 1-acyl-sn-glycero-3-phosphocholine + a fatty acid + H(+). Its function is as follows. Snake venom phospholipase A2 (PLA2) that significantly inhibits ADP-induced platelet aggregation in platelet-rich plasma of human, rabbit and guinea pig. PLA2 catalyzes the calcium-dependent hydrolysis of the 2-acyl groups in 3-sn-phosphoglycerides. The sequence is that of Acidic phospholipase A2 Cvv-E6c from Crotalus viridis viridis (Prairie rattlesnake).